The chain runs to 314 residues: 3'-5' exoribonuclease YhaM (314 aa).

Residues 14–90 (VDLYLLIKSS…QLKLRNIRPA (77 aa)) constitute a DNA-binding region (OB). The HD domain occupies 163-279 (HVVSMLNLAK…LHYIDNLDAK (117 aa)).

The protein belongs to the YhaM family.

Shows a 3'-5' exoribonuclease activity. This is 3'-5' exoribonuclease YhaM from Bacillus licheniformis (strain ATCC 14580 / DSM 13 / JCM 2505 / CCUG 7422 / NBRC 12200 / NCIMB 9375 / NCTC 10341 / NRRL NRS-1264 / Gibson 46).